Consider the following 117-residue polypeptide: Large ribosomal subunit protein bL20 (117 aa).

It belongs to the bacterial ribosomal protein bL20 family.

Its function is as follows. Binds directly to 23S ribosomal RNA and is necessary for the in vitro assembly process of the 50S ribosomal subunit. It is not involved in the protein synthesizing functions of that subunit. This Mycoplasma mobile (strain ATCC 43663 / 163K / NCTC 11711) (Mesomycoplasma mobile) protein is Large ribosomal subunit protein bL20.